The sequence spans 507 residues: Maturase K (507 aa).

It belongs to the intron maturase 2 family. MatK subfamily.

Its subcellular location is the plastid. The protein resides in the chloroplast. Usually encoded in the trnK tRNA gene intron. Probably assists in splicing its own and other chloroplast group II introns. The sequence is that of Maturase K from Nymphaea alba (White water-lily).